The following is a 261-amino-acid chain: MRRCALLFRLFLISYSCSVYFSACTQASSLKEPDEELPRAEQWDDNGKRILQADDPEHIRTEERGITQNLKPAAESIGKVKAAGKAIKTSVLNSKLMNWVKTALRKGYTAWQLVKMYSLSKGGGVSAMMSGITPLTYKTVYGRTIASKVDVKEKFDTFKTEYFKLFEDLDNVKPSSGMQYWDDELKKLPWTRQFTARLALNKVRKILKSDPSVEKMIDLNVSPLLYMRALEKQGAFARNDVAAINKLKDYVKAFKKHVDLA.

The N-terminal stretch at Met-1–Ser-18 is a signal peptide. The RxLR-dEER motif lies at Arg-49–Arg-64.

It belongs to the RxLR effector family.

It is found in the secreted. The protein resides in the host cell membrane. In terms of biological role, secreted effector that completely suppresses the host cell death induced by cell death-inducing proteins. This is Secreted RxLR effector protein 154 from Plasmopara viticola (Downy mildew of grapevine).